Reading from the N-terminus, the 88-residue chain is Small ribosomal subunit protein uS17 (88 aa).

Belongs to the universal ribosomal protein uS17 family. As to quaternary structure, part of the 30S ribosomal subunit.

In terms of biological role, one of the primary rRNA binding proteins, it binds specifically to the 5'-end of 16S ribosomal RNA. The polypeptide is Small ribosomal subunit protein uS17 (Leuconostoc mesenteroides subsp. mesenteroides (strain ATCC 8293 / DSM 20343 / BCRC 11652 / CCM 1803 / JCM 6124 / NCDO 523 / NBRC 100496 / NCIMB 8023 / NCTC 12954 / NRRL B-1118 / 37Y)).